The following is a 158-amino-acid chain: Endoribonuclease YbeY (158 aa).

Positions 119, 123, and 129 each coordinate Zn(2+).

Belongs to the endoribonuclease YbeY family. Zn(2+) serves as cofactor.

It is found in the cytoplasm. Functionally, single strand-specific metallo-endoribonuclease involved in late-stage 70S ribosome quality control and in maturation of the 3' terminus of the 16S rRNA. In Chlamydia abortus (strain DSM 27085 / S26/3) (Chlamydophila abortus), this protein is Endoribonuclease YbeY.